The sequence spans 263 residues: Imidazole glycerol phosphate synthase subunit HisF (263 aa).

Residues Asp11 and Asp130 contribute to the active site.

It belongs to the HisA/HisF family. In terms of assembly, heterodimer of HisH and HisF.

Its subcellular location is the cytoplasm. The catalysed reaction is 5-[(5-phospho-1-deoxy-D-ribulos-1-ylimino)methylamino]-1-(5-phospho-beta-D-ribosyl)imidazole-4-carboxamide + L-glutamine = D-erythro-1-(imidazol-4-yl)glycerol 3-phosphate + 5-amino-1-(5-phospho-beta-D-ribosyl)imidazole-4-carboxamide + L-glutamate + H(+). The protein operates within amino-acid biosynthesis; L-histidine biosynthesis; L-histidine from 5-phospho-alpha-D-ribose 1-diphosphate: step 5/9. Its function is as follows. IGPS catalyzes the conversion of PRFAR and glutamine to IGP, AICAR and glutamate. The HisF subunit catalyzes the cyclization activity that produces IGP and AICAR from PRFAR using the ammonia provided by the HisH subunit. The chain is Imidazole glycerol phosphate synthase subunit HisF from Herpetosiphon aurantiacus (strain ATCC 23779 / DSM 785 / 114-95).